Here is a 156-residue protein sequence, read N- to C-terminus: NADH-ubiquinone oxidoreductase 20 kDa subunit (156 aa).

The [4Fe-4S] cluster site is built by Cys33, Cys34, Cys98, and Cys128.

This sequence belongs to the complex I 20 kDa subunit family. Requires [4Fe-4S] cluster as cofactor.

It is found in the mitochondrion. The catalysed reaction is a ubiquinone + NADH + 5 H(+)(in) = a ubiquinol + NAD(+) + 4 H(+)(out). This Paramecium tetraurelia protein is NADH-ubiquinone oxidoreductase 20 kDa subunit (NAD10).